Reading from the N-terminus, the 737-residue chain is Delta and Notch-like epidermal growth factor-related receptor (737 aa).

The signal sequence occupies residues methionine 1 to alanine 34. Topologically, residues asparagine 35–tyrosine 640 are extracellular. EGF-like domains follow at residues alanine 44 to glutamine 92 and valine 94 to glutamate 133. Residues alanine 44–glutamate 133 form an interaction with NOTCH1 region. Cystine bridges form between cysteine 48-cysteine 59, cysteine 53-cysteine 80, cysteine 82-cysteine 91, cysteine 98-cysteine 108, cysteine 103-cysteine 121, and cysteine 123-cysteine 132. Asparagine 223 carries N-linked (GlcNAc...) asparagine glycosylation. 5 consecutive EGF-like domains span residues proline 309–glutamate 348, glutamate 349–glutamine 390, lysine 392–glutamate 428, lysine 430–alanine 466, and leucine 468–glutamate 503. Cystine bridges form between cysteine 319-cysteine 336, cysteine 338-cysteine 347, cysteine 353-cysteine 364, cysteine 358-cysteine 378, cysteine 380-cysteine 389, cysteine 396-cysteine 407, cysteine 401-cysteine 416, cysteine 418-cysteine 427, cysteine 434-cysteine 445, cysteine 439-cysteine 454, cysteine 456-cysteine 465, cysteine 472-cysteine 482, cysteine 477-cysteine 491, cysteine 493-cysteine 502, cysteine 509-cysteine 520, cysteine 514-cysteine 529, cysteine 531-cysteine 540, cysteine 547-cysteine 558, cysteine 552-cysteine 567, cysteine 569-cysteine 578, cysteine 585-cysteine 596, cysteine 590-cysteine 605, and cysteine 607-cysteine 616. The EGF-like 8; calcium-binding domain occupies glutamate 505–glutamate 541. The EGF-like 9 domain maps to tyrosine 543–aspartate 579. In terms of domain architecture, Follistatin-like spans proline 546–isoleucine 568. The N-linked (GlcNAc...) asparagine glycan is linked to asparagine 564. The EGF-like 10; calcium-binding domain maps to aspartate 581 to glutamate 617. Residues isoleucine 641 to isoleucine 661 traverse the membrane as a helical segment. The Cytoplasmic portion of the chain corresponds to cysteine 662–leucine 737. The interaction with AP1G1 and somatodendritic targeting stretch occupies residues tyrosine 677–phenylalanine 680. Serine 685 is modified (phosphoserine). 2 positions are modified to phosphotyrosine: tyrosine 711 and tyrosine 721. At serine 722 the chain carries Phosphoserine.

Interacts with AP1G1. Interacts with NOTCH1. Expressed in brain, spinal cord and adrenal gland.

It is found in the cell membrane. Activator of the NOTCH1 pathway. May mediate neuron-glia interaction during astrocytogenesis. The polypeptide is Delta and Notch-like epidermal growth factor-related receptor (DNER) (Homo sapiens (Human)).